Reading from the N-terminus, the 135-residue chain is MVKIRLKRTGRKKLPIYQIVAADARSPRDGKFLEVIGHYQPTAKPHAVTIKKDRVAYWMQTGAQPTDTVRSLIRSTGLLYEMRLKKMGRSEEEIVSEMEKWQARQTERRQKRLVVKSRRRQAKKEAEGKAAGAEA.

Positions Thr-106–Ala-135 are disordered. Basic residues predominate over residues Arg-109–Ala-122.

The protein belongs to the bacterial ribosomal protein bS16 family.

The sequence is that of Small ribosomal subunit protein bS16 from Chlorobium phaeobacteroides (strain DSM 266 / SMG 266 / 2430).